Reading from the N-terminus, the 313-residue chain is Ribosomal RNA small subunit methyltransferase H (313 aa).

S-adenosyl-L-methionine-binding positions include 35 to 37 (GGH), D55, F81, D103, and Q110.

The protein belongs to the methyltransferase superfamily. RsmH family.

The protein localises to the cytoplasm. The enzyme catalyses cytidine(1402) in 16S rRNA + S-adenosyl-L-methionine = N(4)-methylcytidine(1402) in 16S rRNA + S-adenosyl-L-homocysteine + H(+). Its function is as follows. Specifically methylates the N4 position of cytidine in position 1402 (C1402) of 16S rRNA. The sequence is that of Ribosomal RNA small subunit methyltransferase H from Pseudomonas syringae pv. tomato (strain ATCC BAA-871 / DC3000).